Reading from the N-terminus, the 302-residue chain is Sulfate adenylyltransferase subunit 2 (302 aa).

It belongs to the PAPS reductase family. CysD subfamily. As to quaternary structure, heterodimer composed of CysD, the smaller subunit, and CysN.

The enzyme catalyses sulfate + ATP + H(+) = adenosine 5'-phosphosulfate + diphosphate. The protein operates within sulfur metabolism; hydrogen sulfide biosynthesis; sulfite from sulfate: step 1/3. With CysN forms the ATP sulfurylase (ATPS) that catalyzes the adenylation of sulfate producing adenosine 5'-phosphosulfate (APS) and diphosphate, the first enzymatic step in sulfur assimilation pathway. APS synthesis involves the formation of a high-energy phosphoric-sulfuric acid anhydride bond driven by GTP hydrolysis by CysN coupled to ATP hydrolysis by CysD. The sequence is that of Sulfate adenylyltransferase subunit 2 from Methylococcus capsulatus (strain ATCC 33009 / NCIMB 11132 / Bath).